Here is a 650-residue protein sequence, read N- to C-terminus: MMNAQTTKIALLLAASAVTMALTGCGGSDGNDGNPGEPGGEPAPAIQILNFTFDKSVITNGVPSVEFTVTNENDLPVVGLQKMRFAAAQLIPQGATGAGNASQWQYFGDETCDVAATCPGTFVDQKNGHYSYTFNMNLTANAKITYNDQLAQRVLIRAYNTPLPDGTQVPNSNAFVDFTADTGAAPTYSRKIVATESCNTCHQDLANVKHGGAYSDVNYCATCHTAGKVGVGKEFNVLVHAKHKDLTLGSLESCQSCHAANDAAPDWGNWSRIPTAATCGSCHSTVDFAAGKGHSQQLDNSNCIACHNSDWTAELHTGKTADKKAVIAQLGMQATLVGQTDDTAVLTVSILDKDGNAIDAATVQDKIKRLETVTNVGPNFPIMGYNKSPGSGAAKIAKDLVKDGALQAGVTLVDGKLVFTTPALPFGTGDTDTAFTFIGLEMCSTGTSLTACTVDSATTSMKAELAFGTKSGNAPSMRHVNSVNFSTCQGCHSDTFEIHKGHHSGFVMTEQVSHAKDANGKAIVGVDGCVACHTPDGTYASGANKGAFEMKLHVIHGEQGVIKECTQCHNDFNLDAFKVKGALATSAGKYTTPITATCTSCHAPESIGHGLENMGAIVNGDYVQANQAAQSETCFYCHKPTPTDHTQVKM.

Residues 1-21 (MMNAQTTKIALLLAASAVTMA) form the signal peptide.

In Shewanella baltica (strain OS185), this protein is Multiheme cytochrome MtrC (mtrC).